The chain runs to 326 residues: Glyoxalase I (326 aa).

VOC domains are found at residues 22–167 and 182–322; these read LLNH…LITY and KFNH…VVPH. Zn(2+) is bound at residue H25. R29 serves as a coordination point for substrate. Position 89 (E89) interacts with Zn(2+). Residues N93, R113, H117, and 147 to 148 each bind substrate; that span reads RQ. Residue H117 coordinates Zn(2+). Residue E163 participates in Zn(2+) binding. Active-site proton donor/acceptor residues include E163 and E318.

Belongs to the glyoxalase I family. As to quaternary structure, monomer. Zn(2+) serves as cofactor.

The enzyme catalyses (R)-S-lactoylglutathione = methylglyoxal + glutathione. It participates in secondary metabolite metabolism; methylglyoxal degradation; (R)-lactate from methylglyoxal: step 1/2. Catalyzes the conversion of hemimercaptal, formed from methylglyoxal and glutathione, to S-lactoylglutathione. Can use gamma-glutamylcysteine as a substrate. In Saccharomyces cerevisiae (strain ATCC 204508 / S288c) (Baker's yeast), this protein is Glyoxalase I.